The chain runs to 324 residues: o-succinylbenzoate synthase (324 aa).

Lysine 135 acts as the Proton donor in catalysis. Mg(2+)-binding residues include aspartate 163, glutamate 192, and aspartate 215. Lysine 237 acts as the Proton acceptor in catalysis.

It belongs to the mandelate racemase/muconate lactonizing enzyme family. MenC type 1 subfamily. Requires a divalent metal cation as cofactor.

The catalysed reaction is (1R,6R)-6-hydroxy-2-succinyl-cyclohexa-2,4-diene-1-carboxylate = 2-succinylbenzoate + H2O. The protein operates within quinol/quinone metabolism; 1,4-dihydroxy-2-naphthoate biosynthesis; 1,4-dihydroxy-2-naphthoate from chorismate: step 4/7. It participates in quinol/quinone metabolism; menaquinone biosynthesis. In terms of biological role, converts 2-succinyl-6-hydroxy-2,4-cyclohexadiene-1-carboxylate (SHCHC) to 2-succinylbenzoate (OSB). The protein is o-succinylbenzoate synthase of Aliivibrio fischeri (strain ATCC 700601 / ES114) (Vibrio fischeri).